The sequence spans 389 residues: Lipid-A-disaccharide synthase (389 aa).

Belongs to the LpxB family.

It catalyses the reaction a lipid X + a UDP-2-N,3-O-bis[(3R)-3-hydroxyacyl]-alpha-D-glucosamine = a lipid A disaccharide + UDP + H(+). It participates in bacterial outer membrane biogenesis; LPS lipid A biosynthesis. Functionally, condensation of UDP-2,3-diacylglucosamine and 2,3-diacylglucosamine-1-phosphate to form lipid A disaccharide, a precursor of lipid A, a phosphorylated glycolipid that anchors the lipopolysaccharide to the outer membrane of the cell. The sequence is that of Lipid-A-disaccharide synthase from Paraburkholderia xenovorans (strain LB400).